Here is a 1357-residue protein sequence, read N- to C-terminus: DNA-directed RNA polymerase subunit beta (1357 aa).

It belongs to the RNA polymerase beta chain family. The RNAP catalytic core consists of 2 alpha, 1 beta, 1 beta' and 1 omega subunit. When a sigma factor is associated with the core the holoenzyme is formed, which can initiate transcription.

It carries out the reaction RNA(n) + a ribonucleoside 5'-triphosphate = RNA(n+1) + diphosphate. DNA-dependent RNA polymerase catalyzes the transcription of DNA into RNA using the four ribonucleoside triphosphates as substrates. The chain is DNA-directed RNA polymerase subunit beta from Pseudomonas aeruginosa (strain UCBPP-PA14).